The following is an 893-amino-acid chain: Protein kintoun (893 aa).

Disordered stretches follow at residues 211–243 (KNAT…VLPM), 372–395 (LSRE…EEAG), 587–719 (EQVH…SIDD), 781–821 (QRKK…QQTA), and 834–893 (PQNN…DEDM). The span at 214 to 232 (TAEEREPHPLEHTYPKKPE) shows a compositional bias: basic and acidic residues. Ser377 is modified (phosphoserine). Residues 594–603 (QQEEEEEEEQ) are compositionally biased toward acidic residues. The span at 609–626 (HQHKKGNKKQRKRNKKQR) shows a compositional bias: basic residues. A compositionally biased stretch (low complexity) spans 640–651 (QQQQHQKQQQQQ). Composition is skewed to polar residues over residues 656 to 667 (ENSSPESLNAGS) and 684 to 694 (FSECNDSSSVQ). Over residues 709–719 (SISESSSSIDD) the composition is skewed to low complexity. Positions 781 to 797 (QRKKNQKRRDCKLRAQQ) are enriched in basic residues. At Ser801 the chain carries Phosphoserine. Low complexity predominate over residues 836–848 (NNNNRSYSKNNKN). Over residues 865-877 (NNEEDTKRNEADA) the composition is skewed to basic and acidic residues. Residues 884–893 (EMDDDDDEDM) are compositionally biased toward acidic residues.

The protein belongs to the PIH1 family. Kintoun subfamily. Interacts with Pp1alpha-96A, Pp1-87B, Pp1-13C and flw.

The protein resides in the cytoplasm. Functionally, required for cytoplasmic pre-assembly of axonemal dyneins, thereby playing a central role in motility in cilia and flagella. Involved in pre-assembly of dynein arm complexes in the cytoplasm before intraflagellar transport loads them for the ciliary compartment. The sequence is that of Protein kintoun from Drosophila grimshawi (Hawaiian fruit fly).